Here is a 489-residue protein sequence, read N- to C-terminus: Poly(A) RNA polymerase GLD2 (489 aa).

A disordered region spans residues 93-118 (RQRFSCPSPHNQSARNSNFTSQPVTR). Over residues 100–116 (SPHNQSARNSNFTSQPV) the composition is skewed to polar residues. Residues D219 and D221 each coordinate Mg(2+). The PAP-associated domain occupies 386–440 (SLGDLFLGFLRYYATVFKWDKQVISVRMARTLPKSNCKEWKDKFICVEEPFNRTN).

It belongs to the DNA polymerase type-B-like family. GLD2 subfamily. It depends on Mg(2+) as a cofactor. Mn(2+) is required as a cofactor.

Its subcellular location is the cytoplasm. The enzyme catalyses RNA(n) + ATP = RNA(n)-3'-adenine ribonucleotide + diphosphate. Its function is as follows. Cytoplasmic poly(A) RNA polymerase that adds successive AMP monomers to the 3'-end of specific RNAs, forming a poly(A) tail. In contrast to the canonical nuclear poly(A) RNA polymerase, it only adds poly(A) to selected cytoplasmic mRNAs. May not play a role in replication-dependent histone mRNA degradation. The protein is Poly(A) RNA polymerase GLD2 of Danio rerio (Zebrafish).